Consider the following 541-residue polypeptide: Chaperonin GroEL (541 aa).

Residues 29-32 (TLGP), 86-90 (DGTTT), glycine 413, 477-479 (DAL), and aspartate 493 contribute to the ATP site.

The protein belongs to the chaperonin (HSP60) family. In terms of assembly, forms a cylinder of 14 subunits composed of two heptameric rings stacked back-to-back. Interacts with the co-chaperonin GroES.

The protein localises to the cytoplasm. The catalysed reaction is ATP + H2O + a folded polypeptide = ADP + phosphate + an unfolded polypeptide.. Together with its co-chaperonin GroES, plays an essential role in assisting protein folding. The GroEL-GroES system forms a nano-cage that allows encapsulation of the non-native substrate proteins and provides a physical environment optimized to promote and accelerate protein folding. This chain is Chaperonin GroEL, found in Clostridium botulinum (strain Loch Maree / Type A3).